A 325-amino-acid chain; its full sequence is Structure-specific endonuclease subunit SLX1 (325 aa).

One can recognise a GIY-YIG domain in the interval 10-92 (ALYTVYILRS…NNPHLSMHIP (83 aa)). The segment at 230–284 (CVVCREEMKSGEGLHAVCTHEGCDGVGHISCWSRSFLKNNDTGSILPVQGQCPMC) adopts an SLX1-type zinc-finger fold.

The protein belongs to the SLX1 family. As to quaternary structure, forms a heterodimer with SLX4. A divalent metal cation is required as a cofactor.

It localises to the nucleus. Catalytic subunit of the SLX1-SLX4 structure-specific endonuclease that resolves DNA secondary structures generated during DNA repair and recombination. Has endonuclease activity towards branched DNA substrates, introducing single-strand cuts in duplex DNA close to junctions with ss-DNA. The protein is Structure-specific endonuclease subunit SLX1 of Chaetomium globosum (strain ATCC 6205 / CBS 148.51 / DSM 1962 / NBRC 6347 / NRRL 1970) (Soil fungus).